Reading from the N-terminus, the 121-residue chain is Large ribosomal subunit protein bL12 (121 aa).

The protein belongs to the bacterial ribosomal protein bL12 family. In terms of assembly, homodimer. Part of the ribosomal stalk of the 50S ribosomal subunit. Forms a multimeric L10(L12)X complex, where L10 forms an elongated spine to which 2 to 4 L12 dimers bind in a sequential fashion. Binds GTP-bound translation factors.

In terms of biological role, forms part of the ribosomal stalk which helps the ribosome interact with GTP-bound translation factors. Is thus essential for accurate translation. The chain is Large ribosomal subunit protein bL12 from Oenococcus oeni (strain ATCC BAA-331 / PSU-1).